A 1166-amino-acid polypeptide reads, in one-letter code: ATP-dependent helicase/deoxyribonuclease subunit B (1166 aa).

Positions 1 to 285 (MGAVFLSGRS…VRLEETKRHR (285 aa)) constitute a UvrD-like helicase ATP-binding domain. 8 to 15 (GRSGSGKT) is a binding site for ATP. Residues 279 to 586 (EETKRHRHHP…KFALIPPALD (308 aa)) form the UvrD-like helicase C-terminal domain. [4Fe-4S] cluster is bound by residues C801, C1121, C1124, and C1130.

The protein belongs to the helicase family. AddB/RexB type 1 subfamily. In terms of assembly, heterodimer of AddA and AddB. The cofactor is Mg(2+). [4Fe-4S] cluster is required as a cofactor.

The heterodimer acts as both an ATP-dependent DNA helicase and an ATP-dependent, dual-direction single-stranded exonuclease. Recognizes the chi site generating a DNA molecule suitable for the initiation of homologous recombination. The AddB subunit has 5' -&gt; 3' nuclease activity but not helicase activity. This is ATP-dependent helicase/deoxyribonuclease subunit B from Bacillus licheniformis (strain ATCC 14580 / DSM 13 / JCM 2505 / CCUG 7422 / NBRC 12200 / NCIMB 9375 / NCTC 10341 / NRRL NRS-1264 / Gibson 46).